The sequence spans 362 residues: 3-dehydroquinate synthase (362 aa).

NAD(+) is bound by residues 71–76 (DGEQYK), 105–109 (GVVGD), 129–130 (TT), Lys142, Lys151, and 169–172 (CLKT). Positions 184, 247, and 264 each coordinate Zn(2+).

Belongs to the sugar phosphate cyclases superfamily. Dehydroquinate synthase family. Co(2+) is required as a cofactor. The cofactor is Zn(2+). NAD(+) serves as cofactor.

The protein localises to the cytoplasm. It catalyses the reaction 7-phospho-2-dehydro-3-deoxy-D-arabino-heptonate = 3-dehydroquinate + phosphate. The protein operates within metabolic intermediate biosynthesis; chorismate biosynthesis; chorismate from D-erythrose 4-phosphate and phosphoenolpyruvate: step 2/7. Functionally, catalyzes the conversion of 3-deoxy-D-arabino-heptulosonate 7-phosphate (DAHP) to dehydroquinate (DHQ). The chain is 3-dehydroquinate synthase from Escherichia coli (strain 55989 / EAEC).